A 325-amino-acid chain; its full sequence is MKKHTHHKAYGDSTGKEPLIDLQSIKLWLNSFGNQGHSSEAVLNVLFTLGVILFVIYQVASLLHRMNKRVEKQLESRTKQRKVEVADKHVGDEMVFTDLHENVIRERMIPYRMPVINDDITLRNSQIFYEEMKMRRSCRQFSSRDVPLKVIQNLLKTAGTSPSVGNLQPWTFCVVSSDSIKTMIRKILEADERDNYVSRKKGASWVVDVSQLQDTWRRPYITDAPYLLIVCHEIFRDVHSKTERVFHYNQISTSIAVGILLAAIQNVGLSTVVTSPLNAGPDISRILRRPENESILLLLPLGYASEDVLVPDLKRKPVEHITKLY.

A helical transmembrane segment spans residues 42-62 (VLNVLFTLGVILFVIYQVASL). Topologically, residues 63 to 325 (LHRMNKRVEK…KPVEHITKLY (263 aa)) are cytoplasmic. FMN contacts are provided by residues 135 to 139 (RRSCR), 163 to 164 (SV), 273 to 275 (VTS), and Arg315.

It belongs to the nitroreductase family. FMN serves as cofactor. In terms of tissue distribution, expressed in body-wall, anal depressor and vulval muscles.

Its subcellular location is the membrane. May contribute to coordination of muscle contraction as regulatory subunit of the nonessential sup-9 potassium channel complex. May act downstream of sup-10. The polypeptide is Iodotyrosine dehalogenase 1 homolog (Caenorhabditis elegans).